Reading from the N-terminus, the 305-residue chain is Sulfate adenylyltransferase subunit 2 (305 aa).

Belongs to the PAPS reductase family. CysD subfamily. Heterodimer composed of CysD, the smaller subunit, and CysN.

The enzyme catalyses sulfate + ATP + H(+) = adenosine 5'-phosphosulfate + diphosphate. It participates in sulfur metabolism; hydrogen sulfide biosynthesis; sulfite from sulfate: step 1/3. Its function is as follows. With CysN forms the ATP sulfurylase (ATPS) that catalyzes the adenylation of sulfate producing adenosine 5'-phosphosulfate (APS) and diphosphate, the first enzymatic step in sulfur assimilation pathway. APS synthesis involves the formation of a high-energy phosphoric-sulfuric acid anhydride bond driven by GTP hydrolysis by CysN coupled to ATP hydrolysis by CysD. This Myxococcus xanthus (strain DK1622) protein is Sulfate adenylyltransferase subunit 2.